Here is a 259-residue protein sequence, read N- to C-terminus: MNRDNAIAWSVEDLCVNYDHSDVLCHITFSLPAGAMAAIIGPNGAGKSTLLKASLGLIRASSGQSLFFGQRFSKVHHRIAYMPQRASVDWDFPMTVLDLVLMGCYGYKGIWNRISTDDRQEAMRILERVGLEAFANRQIGKLSGGQQQRAFLARSLMQKADLYLMDELFSAIDMASYQMVVDVLQELKSEGKTIVVIHHDLSNVRKLFDHVILLNKHLVCSGSVEECLTKEAIFQAYGCELELLDYTLKLSRGKYQGSC.

Positions 9 to 241 (WSVEDLCVNY…AIFQAYGCEL (233 aa)) constitute an ABC transporter domain. 41 to 48 (GPNGAGKS) serves as a coordination point for ATP.

It belongs to the ABC transporter superfamily.

The protein resides in the cell inner membrane. Part of an ATP-driven transport system CT_067/CT_068/CT_069/CT_070 for a metal. Probably responsible for energy coupling to the transport system. This is Probable metal transport system ATP-binding protein CT_068 from Chlamydia trachomatis serovar D (strain ATCC VR-885 / DSM 19411 / UW-3/Cx).